Here is a 159-residue protein sequence, read N- to C-terminus: Ribosomal RNA large subunit methyltransferase H (159 aa).

S-adenosyl-L-methionine is bound by residues Leu76, Gly108, and 127–132 (FSKMTF).

This sequence belongs to the RNA methyltransferase RlmH family. In terms of assembly, homodimer.

The protein localises to the cytoplasm. The catalysed reaction is pseudouridine(1915) in 23S rRNA + S-adenosyl-L-methionine = N(3)-methylpseudouridine(1915) in 23S rRNA + S-adenosyl-L-homocysteine + H(+). In terms of biological role, specifically methylates the pseudouridine at position 1915 (m3Psi1915) in 23S rRNA. This chain is Ribosomal RNA large subunit methyltransferase H, found in Clostridium botulinum (strain Eklund 17B / Type B).